We begin with the raw amino-acid sequence, 199 residues long: MYEGIVQELIDELGRLPGIGPKSAQRIAFHILQTETFDVSRLAEVLTVVRDKVRFCAICGNVSEKETCGICRDPRRSPATICVVEEAKDVVAIERTREFRGLYHVLGGAISPIDGIGPDDLRIRQLMQRLADATVTEVIIATDPNLEGEATATYLSRLLSTFDIRVTRLASGLPVGGDLEYADEVTLGRAFEGRRLVGE.

Residues 56–71 (CAICGNVSEKETCGIC) form a C4-type zinc finger. A Toprim domain is found at 79-174 (ATICVVEEAK…RVTRLASGLP (96 aa)).

Belongs to the RecR family.

May play a role in DNA repair. It seems to be involved in an RecBC-independent recombinational process of DNA repair. It may act with RecF and RecO. The chain is Recombination protein RecR from Clavibacter michiganensis subsp. michiganensis (strain NCPPB 382).